We begin with the raw amino-acid sequence, 641 residues long: Homeobox protein ceh-38 (641 aa).

2 stretches are compositionally biased toward polar residues: residues 1–14 and 28–38; these read MESS…TNGT and DPSSTFINNTG. Disordered regions lie at residues 1–79 and 129–244; these read MESS…TSSA and LHVD…GDRM. Residues 52-79 show a composition bias toward low complexity; the sequence is TISPHPITPSASTSSATSATEEPATSSA. The segment covering 131–140 has biased composition (basic and acidic residues); the sequence is VDSRRRESHD. Composition is skewed to polar residues over residues 167-183 and 190-204; these read TPTN…SSLL and NTIG…TFGS. The segment at residues 308–394 is a DNA-binding region (CUT); sequence NAEIGDDIYI…TRLAILDMKT (87 aa). Disordered stretches follow at residues 398–428, 485–508, and 552–641; these read NRAS…PVSK, GGNI…VGDT, and FGVS…LAAN. A DNA-binding region (homeobox) is located at residues 427–486; the sequence is SKRPRLVFTDIQKRTLQAIFKETQRPSREMQQTIAEHLRLDLSTVANFFMNARRRSRLGG. Residues 571–604 are compositionally biased toward acidic residues; the sequence is HEDDEELDELNDSELAYEEDVEIGDEEEEDEEQA. The segment covering 613–626 has biased composition (basic and acidic residues); the sequence is KVEELEEKTVIKEE.

Belongs to the CUT homeobox family. Expressed in the embryo. After gastrulation, expressed in almost all cells. During larval and adult stages, expressed in the dorsal and ventral nerve cord, head and tail neurons, pharynx, gut and head.

It is found in the nucleus. In terms of biological role, probable DNA-binding regulatory protein involved in cell-fate specification. The protein is Homeobox protein ceh-38 (ceh-38) of Caenorhabditis elegans.